The primary structure comprises 265 residues: Hydroxyethylthiazole kinase (265 aa).

M50 contacts substrate. Residues R125 and T171 each contribute to the ATP site. G198 lines the substrate pocket.

It belongs to the Thz kinase family. Mg(2+) is required as a cofactor.

The enzyme catalyses 5-(2-hydroxyethyl)-4-methylthiazole + ATP = 4-methyl-5-(2-phosphooxyethyl)-thiazole + ADP + H(+). It participates in cofactor biosynthesis; thiamine diphosphate biosynthesis; 4-methyl-5-(2-phosphoethyl)-thiazole from 5-(2-hydroxyethyl)-4-methylthiazole: step 1/1. In terms of biological role, catalyzes the phosphorylation of the hydroxyl group of 4-methyl-5-beta-hydroxyethylthiazole (THZ). The protein is Hydroxyethylthiazole kinase of Salmonella typhimurium (strain LT2 / SGSC1412 / ATCC 700720).